Consider the following 61-residue polypeptide: Small ribosomal subunit protein bS21 (61 aa).

It belongs to the bacterial ribosomal protein bS21 family.

The sequence is that of Small ribosomal subunit protein bS21 from Leuconostoc mesenteroides subsp. mesenteroides (strain ATCC 8293 / DSM 20343 / BCRC 11652 / CCM 1803 / JCM 6124 / NCDO 523 / NBRC 100496 / NCIMB 8023 / NCTC 12954 / NRRL B-1118 / 37Y).